A 397-amino-acid chain; its full sequence is Serpin B10 (397 aa).

A Nuclear localization signal motif is present at residues 74–77 (KKRK).

The protein belongs to the serpin family. Ov-serpin subfamily.

The protein resides in the nucleus. It localises to the cytoplasm. Its function is as follows. Protease inhibitor that may play a role in the regulation of protease activities during hematopoiesis and apoptosis induced by TNF. May regulate protease activities in the cytoplasm and in the nucleus. In Bos taurus (Bovine), this protein is Serpin B10 (SERPINB10).